The sequence spans 497 residues: Glycerol kinase (497 aa).

Residue Thr-12 coordinates ADP. ATP-binding residues include Thr-12, Thr-13, and Ser-14. Residue Thr-12 coordinates sn-glycerol 3-phosphate. Arg-16 lines the ADP pocket. Residues Arg-82, Glu-83, Tyr-134, and Asp-243 each coordinate sn-glycerol 3-phosphate. 5 residues coordinate glycerol: Arg-82, Glu-83, Tyr-134, Asp-243, and Gln-244. 2 residues coordinate ADP: Thr-265 and Gly-308. Residues Thr-265, Gly-308, Gln-312, and Gly-411 each coordinate ATP. An ADP-binding site is contributed by Gly-411.

It belongs to the FGGY kinase family.

It catalyses the reaction glycerol + ATP = sn-glycerol 3-phosphate + ADP + H(+). It participates in polyol metabolism; glycerol degradation via glycerol kinase pathway; sn-glycerol 3-phosphate from glycerol: step 1/1. Inhibited by fructose 1,6-bisphosphate (FBP). Key enzyme in the regulation of glycerol uptake and metabolism. Catalyzes the phosphorylation of glycerol to yield sn-glycerol 3-phosphate. In Rhizobium meliloti (strain 1021) (Ensifer meliloti), this protein is Glycerol kinase.